Consider the following 119-residue polypeptide: Large ribosomal subunit protein uL18 (119 aa).

The protein belongs to the universal ribosomal protein uL18 family. In terms of assembly, part of the 50S ribosomal subunit; part of the 5S rRNA/L5/L18/L25 subcomplex. Contacts the 5S and 23S rRNAs.

Its function is as follows. This is one of the proteins that bind and probably mediate the attachment of the 5S RNA into the large ribosomal subunit, where it forms part of the central protuberance. The sequence is that of Large ribosomal subunit protein uL18 from Mesorhizobium japonicum (strain LMG 29417 / CECT 9101 / MAFF 303099) (Mesorhizobium loti (strain MAFF 303099)).